A 99-amino-acid chain; its full sequence is Nucleoid-associated protein SSU98_0195 (99 aa).

This sequence belongs to the YbaB/EbfC family. As to quaternary structure, homodimer.

It is found in the cytoplasm. The protein localises to the nucleoid. Its function is as follows. Binds to DNA and alters its conformation. May be involved in regulation of gene expression, nucleoid organization and DNA protection. The protein is Nucleoid-associated protein SSU98_0195 of Streptococcus suis (strain 98HAH33).